Consider the following 368-residue polypeptide: tRNA-specific 2-thiouridylase MnmA (368 aa).

ATP-binding positions include 11 to 18 and Met37; that span reads GMSGGVDS. The segment at 97-99 is interaction with target base in tRNA; that stretch reads NPD. Residue Cys102 is the Nucleophile of the active site. Cys102 and Cys199 are joined by a disulfide. An ATP-binding site is contributed by Gly127. The tract at residues 149 to 151 is interaction with tRNA; it reads KDQ. Cys199 serves as the catalytic Cysteine persulfide intermediate. An interaction with tRNA region spans residues 311-312; it reads RY.

Belongs to the MnmA/TRMU family. Interacts with TusE.

The protein localises to the cytoplasm. The enzyme catalyses S-sulfanyl-L-cysteinyl-[protein] + uridine(34) in tRNA + AH2 + ATP = 2-thiouridine(34) in tRNA + L-cysteinyl-[protein] + A + AMP + diphosphate + H(+). Its function is as follows. Catalyzes the 2-thiolation of uridine at the wobble position (U34) of tRNA(Lys), tRNA(Glu) and tRNA(Gln), leading to the formation of s(2)U34, the first step of tRNA-mnm(5)s(2)U34 synthesis. Sulfur is provided by IscS, via a sulfur-relay system. Binds ATP and its substrate tRNAs. The polypeptide is tRNA-specific 2-thiouridylase MnmA (Escherichia coli O157:H7).